The chain runs to 470 residues: Sorting nexin-17 (470 aa).

In terms of domain architecture, PX spans 1-109 (MHFSIPETES…SFLRRAQQET (109 aa)). The a 1,2-diacyl-sn-glycero-3-phospho-(1D-myo-inositol-3-phosphate) site is built by Arg-36, Ser-38, Lys-62, and Arg-75. One can recognise a Ras-associating domain in the interval 115–206 (EEVSLEVLLS…YKIVLRKSYW (92 aa)). Residues 115 to 432 (EEVSLEVLLS…DASRESMVKL (318 aa)) are FERM-like. Residues 270-432 (GYLRFDACVA…DASRESMVKL (163 aa)) are PTB-like F3 module. Ser-336, Ser-407, Ser-409, Ser-415, Ser-421, Ser-437, and Ser-440 each carry phosphoserine. The segment at 401-426 (GGTLRRSDSQQAVKSPPLLESPDASR) is disordered.

Belongs to the sorting nexin family. As to quaternary structure, monomer. Interacts with APP (via cytoplasmic YXNPXY motif). Interacts with KIF1B. Interacts with the C-termini of P-selectin, PTC, LDLR, VLDLR, LRP1 and LRP8. Interacts with KRIT1 (via N-terminus). Interacts with HRAS. Interacts with ITGB1 and ITGB5 (via NPxY motif). Interacts with CCDC22 and CCDC93; the interaction associates SNX17 with the CCC complex. Interacts (via C-terminus) with VPS26C and VPS35L; the interactions are direct and associate SNX17 with the retriever complex. In terms of tissue distribution, detected in brain neurons (at protein level). Broadly expressed, with highest levels in brain and placenta, and lowest levels in colon, intestine and liver.

Its subcellular location is the cytoplasm. It is found in the early endosome. It localises to the cytoplasmic vesicle membrane. Its function is as follows. Critical regulator of endosomal recycling of numerous surface proteins, including integrins, signaling receptor and channels. Binds to NPxY sequences in the cytoplasmic tails of target cargos. Associates with retriever and CCC complexes to prevent lysosomal degradation and promote cell surface recycling of numerous cargos such as integrins ITGB1, ITGB5 and their associated alpha subunits. Also required for maintenance of normal cell surface levels of APP and LRP1. Interacts with membranes containing phosphatidylinositol 3-phosphate (PtdIns(3P)). In Mus musculus (Mouse), this protein is Sorting nexin-17 (Snx17).